A 137-amino-acid polypeptide reads, in one-letter code: Large ribosomal subunit protein uL16 (137 aa).

The protein belongs to the universal ribosomal protein uL16 family. Part of the 50S ribosomal subunit.

Functionally, binds 23S rRNA and is also seen to make contacts with the A and possibly P site tRNAs. This is Large ribosomal subunit protein uL16 from Rhizobium rhizogenes (strain K84 / ATCC BAA-868) (Agrobacterium radiobacter).